We begin with the raw amino-acid sequence, 324 residues long: Glyoxylate/hydroxypyruvate reductase B (324 aa).

Catalysis depends on residues Arg-237 and Glu-266. His-285 serves as the catalytic Proton donor.

It belongs to the D-isomer specific 2-hydroxyacid dehydrogenase family. GhrB subfamily. As to quaternary structure, homodimer.

Its subcellular location is the cytoplasm. It carries out the reaction glycolate + NADP(+) = glyoxylate + NADPH + H(+). The catalysed reaction is (R)-glycerate + NAD(+) = 3-hydroxypyruvate + NADH + H(+). It catalyses the reaction (R)-glycerate + NADP(+) = 3-hydroxypyruvate + NADPH + H(+). In terms of biological role, catalyzes the NADPH-dependent reduction of glyoxylate and hydroxypyruvate into glycolate and glycerate, respectively. The chain is Glyoxylate/hydroxypyruvate reductase B from Escherichia coli (strain ATCC 8739 / DSM 1576 / NBRC 3972 / NCIMB 8545 / WDCM 00012 / Crooks).